The chain runs to 308 residues: Porphobilinogen deaminase (308 aa).

Position 241 is an S-(dipyrrolylmethanemethyl)cysteine (Cys241).

This sequence belongs to the HMBS family. In terms of assembly, monomer. Dipyrromethane serves as cofactor.

It catalyses the reaction 4 porphobilinogen + H2O = hydroxymethylbilane + 4 NH4(+). Its pathway is porphyrin-containing compound metabolism; protoporphyrin-IX biosynthesis; coproporphyrinogen-III from 5-aminolevulinate: step 2/4. Tetrapolymerization of the monopyrrole PBG into the hydroxymethylbilane pre-uroporphyrinogen in several discrete steps. The polypeptide is Porphobilinogen deaminase (Staphylococcus aureus (strain MRSA252)).